Consider the following 508-residue polypeptide: Hydroxymethylglutaryl-CoA synthase, mitochondrial (508 aa).

The N-terminal 37 residues, 1–37, are a transit peptide targeting the mitochondrion; the sequence is MQRLLTPVKRILQLTRAVQETSLTPARLLPVAHQRFS. K52 is subject to N6-succinyllysine. (3S)-3-hydroxy-3-methylglutaryl-CoA contacts are provided by E80 and A81. K83 carries the N6-acetyllysine; alternate modification. K83 carries the N6-succinyllysine; alternate modification. The Proton donor/acceptor role is filled by E132. Positions 166, 204, and 208 each coordinate (3S)-3-hydroxy-3-methylglutaryl-CoA. Catalysis depends on C166, which acts as the Acyl-thioester intermediate. Position 221 is an N6-succinyllysine (K221). An N6-acetyllysine modification is found at K243. Position 256 is an N6-acetyllysine; alternate (K256). K256 bears the N6-succinyllysine; alternate mark. (3S)-3-hydroxy-3-methylglutaryl-CoA is bound by residues S258 and H301. H301 functions as the Proton donor/acceptor in the catalytic mechanism. An N6-acetyllysine modification is found at K306. Residue K310 participates in (3S)-3-hydroxy-3-methylglutaryl-CoA binding. K310 bears the N6-acetyllysine; alternate mark. K310 carries the N6-succinyllysine; alternate modification. K333 is subject to N6-succinyllysine. K342, K350, K354, and K358 each carry N6-acetyllysine; alternate. An N6-succinyllysine; alternate mark is found at K342, K350, K354, and K358. Positions 380 and 414 each coordinate (3S)-3-hydroxy-3-methylglutaryl-CoA. A Phosphoserine modification is found at S433. N6-acetyllysine is present on K437. Position 440 is a phosphoserine (S440). At K447 the chain carries N6-acetyllysine; alternate. Residue K447 is modified to N6-succinyllysine; alternate. Phosphoserine is present on S456. K473 carries the N6-acetyllysine; alternate modification. An N6-succinyllysine; alternate modification is found at K473. A Phosphoserine modification is found at S477.

Belongs to the thiolase-like superfamily. HMG-CoA synthase family. Homodimer. Post-translationally, succinylated. Desuccinylated by SIRT5. Succinylation, at least at Lys-83 and Lys-310, inhibits the enzymatic activity. As to expression, expression in liver is 200-fold higher than in any other tissue. Low expression in colon, kidney, testis, and pancreas. Very low expression in heart and skeletal muscle. Not detected in brain. Highest expression detected in heart and skeletal muscle.

It is found in the mitochondrion. The catalysed reaction is acetoacetyl-CoA + acetyl-CoA + H2O = (3S)-3-hydroxy-3-methylglutaryl-CoA + CoA + H(+). It functions in the pathway metabolic intermediate biosynthesis; (R)-mevalonate biosynthesis; (R)-mevalonate from acetyl-CoA: step 2/3. In terms of biological role, catalyzes the first irreversible step in ketogenesis, condensing acetyl-CoA to acetoacetyl-CoA to form HMG-CoA, which is converted by HMG-CoA reductase (HMGCR) into mevalonate. The chain is Hydroxymethylglutaryl-CoA synthase, mitochondrial (HMGCS2) from Homo sapiens (Human).